The following is a 533-amino-acid chain: NAD(P)H-quinone oxidoreductase chain 4 (533 aa).

15 consecutive transmembrane segments (helical) span residues 5 to 25 (VPWL…VPLV), 36 to 56 (WYAL…YLTG), 70 to 90 (VSWL…LSMP), 91 to 111 (LILL…PVSF), 115 to 135 (LFYF…AVQD), 137 to 157 (LLFF…LAIW), 169 to 189 (FILY…AMGF), 210 to 230 (GFQL…LPIV), 244 to 264 (TAPV…YALL), 278 to 298 (FAPL…LTSF), 315 to 335 (MGFV…GAML), 336 to 356 (QMIS…ATYD), 377 to 397 (FALW…SGFV), 418 to 438 (VVIC…LLSM), and 465 to 485 (VYII…PKLM).

The protein belongs to the complex I subunit 4 family.

Its subcellular location is the cellular thylakoid membrane. It carries out the reaction a plastoquinone + NADH + (n+1) H(+)(in) = a plastoquinol + NAD(+) + n H(+)(out). It catalyses the reaction a plastoquinone + NADPH + (n+1) H(+)(in) = a plastoquinol + NADP(+) + n H(+)(out). In terms of biological role, NDH-1 shuttles electrons from NAD(P)H, via FMN and iron-sulfur (Fe-S) centers, to quinones in the respiratory chain. The immediate electron acceptor for the enzyme in this species is believed to be plastoquinone. Couples the redox reaction to proton translocation (for every two electrons transferred, four hydrogen ions are translocated across the cytoplasmic membrane), and thus conserves the redox energy in a proton gradient. The chain is NAD(P)H-quinone oxidoreductase chain 4 from Synechococcus sp. (strain CC9605).